A 151-amino-acid polypeptide reads, in one-letter code: Cytochrome c-type biogenesis protein CcmE (151 aa).

Residues 1–8 (MNPLRRKR) are Cytoplasmic-facing. The helical; Signal-anchor for type II membrane protein transmembrane segment at 9-29 (LLIILAILVGVGIAVGLALSA) threads the bilayer. The Periplasmic segment spans residues 30 to 151 (LQQNINLFYT…QSAPTPAKEG (122 aa)). Heme is bound by residues His124 and Tyr128.

It belongs to the CcmE/CycJ family.

The protein localises to the cell inner membrane. Heme chaperone required for the biogenesis of c-type cytochromes. Transiently binds heme delivered by CcmC and transfers the heme to apo-cytochromes in a process facilitated by CcmF and CcmH. The protein is Cytochrome c-type biogenesis protein CcmE of Pseudomonas fluorescens (strain SBW25).